Consider the following 118-residue polypeptide: Nitrogenase-stabilizing/protective protein NifW (118 aa).

The protein belongs to the NifW family. As to quaternary structure, homotrimer; associates with NifD.

In terms of biological role, may protect the nitrogenase Fe-Mo protein from oxidative damage. This is Nitrogenase-stabilizing/protective protein NifW from Rhodopseudomonas palustris (strain BisB5).